We begin with the raw amino-acid sequence, 223 residues long: Thiamine-phosphate synthase (223 aa).

Residues 47-51 (QLRDK) and N84 contribute to the 4-amino-2-methyl-5-(diphosphooxymethyl)pyrimidine site. The Mg(2+) site is built by D85 and D104. S123 provides a ligand contact to 4-amino-2-methyl-5-(diphosphooxymethyl)pyrimidine. Residue 150-152 (TPT) participates in 2-[(2R,5Z)-2-carboxy-4-methylthiazol-5(2H)-ylidene]ethyl phosphate binding. K153 lines the 4-amino-2-methyl-5-(diphosphooxymethyl)pyrimidine pocket. G182 is a 2-[(2R,5Z)-2-carboxy-4-methylthiazol-5(2H)-ylidene]ethyl phosphate binding site.

This sequence belongs to the thiamine-phosphate synthase family. The cofactor is Mg(2+).

The catalysed reaction is 2-[(2R,5Z)-2-carboxy-4-methylthiazol-5(2H)-ylidene]ethyl phosphate + 4-amino-2-methyl-5-(diphosphooxymethyl)pyrimidine + 2 H(+) = thiamine phosphate + CO2 + diphosphate. It carries out the reaction 2-(2-carboxy-4-methylthiazol-5-yl)ethyl phosphate + 4-amino-2-methyl-5-(diphosphooxymethyl)pyrimidine + 2 H(+) = thiamine phosphate + CO2 + diphosphate. The enzyme catalyses 4-methyl-5-(2-phosphooxyethyl)-thiazole + 4-amino-2-methyl-5-(diphosphooxymethyl)pyrimidine + H(+) = thiamine phosphate + diphosphate. It participates in cofactor biosynthesis; thiamine diphosphate biosynthesis; thiamine phosphate from 4-amino-2-methyl-5-diphosphomethylpyrimidine and 4-methyl-5-(2-phosphoethyl)-thiazole: step 1/1. Condenses 4-methyl-5-(beta-hydroxyethyl)thiazole monophosphate (THZ-P) and 2-methyl-4-amino-5-hydroxymethyl pyrimidine pyrophosphate (HMP-PP) to form thiamine monophosphate (TMP). The protein is Thiamine-phosphate synthase of Saccharopolyspora erythraea (strain ATCC 11635 / DSM 40517 / JCM 4748 / NBRC 13426 / NCIMB 8594 / NRRL 2338).